A 150-amino-acid chain; its full sequence is Cytosine deaminase (150 aa).

Residues 3-121 enclose the CMP/dCMP-type deaminase domain; the sequence is FDDKKGLQVA…KLLIENGVEV (119 aa). Residue Asn-44 participates in substrate binding. Zn(2+) is bound at residue His-55. Glu-57 acts as the Proton donor in catalysis. Residues Cys-84 and Cys-87 each contribute to the Zn(2+) site. Position 147 (Asp-147) interacts with substrate.

The protein belongs to the cytidine and deoxycytidylate deaminase family. As to quaternary structure, homodimer. The cofactor is Zn(2+).

The protein resides in the cytoplasm. It localises to the nucleus. The enzyme catalyses cytosine + H2O + H(+) = uracil + NH4(+). The protein operates within pyrimidine metabolism; UMP biosynthesis via salvage pathway; uracil from cytosine: step 1/1. Catalyzes the hydrolytic deamination of cytosine to uracil or 5-methylcytosine to thymine. Is involved in the pyrimidine salvage pathway, which allows the cell to utilize cytosine for pyrimidine nucleotide synthesis. The polypeptide is Cytosine deaminase (Candida albicans (strain SC5314 / ATCC MYA-2876) (Yeast)).